A 450-amino-acid polypeptide reads, in one-letter code: Tubulin alpha-6 chain (450 aa).

GTP is bound by residues glutamine 11, glutamate 71, glycine 144, threonine 145, threonine 179, asparagine 206, and asparagine 228. Mg(2+) is bound at residue glutamate 71. The active site involves glutamate 254.

The protein belongs to the tubulin family. Dimer of alpha and beta chains. A typical microtubule is a hollow water-filled tube with an outer diameter of 25 nm and an inner diameter of 15 nM. Alpha-beta heterodimers associate head-to-tail to form protofilaments running lengthwise along the microtubule wall with the beta-tubulin subunit facing the microtubule plus end conferring a structural polarity. Microtubules usually have 13 protofilaments but different protofilament numbers can be found in some organisms and specialized cells. The cofactor is Mg(2+). Undergoes a tyrosination/detyrosination cycle, the cyclic removal and re-addition of a C-terminal tyrosine residue by the enzymes tubulin tyrosine carboxypeptidase (TTCP) and tubulin tyrosine ligase (TTL), respectively.

It localises to the cytoplasm. It is found in the cytoskeleton. The catalysed reaction is GTP + H2O = GDP + phosphate + H(+). In terms of biological role, tubulin is the major constituent of microtubules, a cylinder consisting of laterally associated linear protofilaments composed of alpha- and beta-tubulin heterodimers. Microtubules grow by the addition of GTP-tubulin dimers to the microtubule end, where a stabilizing cap forms. Below the cap, tubulin dimers are in GDP-bound state, owing to GTPase activity of alpha-tubulin. The chain is Tubulin alpha-6 chain (TUBA6) from Zea mays (Maize).